The chain runs to 446 residues: 3-phosphoshikimate 1-carboxyvinyltransferase (446 aa).

Residues K21, S22, and R26 each coordinate 3-phosphoshikimate. K21 provides a ligand contact to phosphoenolpyruvate. Residues G92 and R120 each coordinate phosphoenolpyruvate. 3-phosphoshikimate contacts are provided by S165, Q166, D308, and K335. Q166 contributes to the phosphoenolpyruvate binding site. D308 functions as the Proton acceptor in the catalytic mechanism. R339, R380, and K406 together coordinate phosphoenolpyruvate.

The protein belongs to the EPSP synthase family. Monomer.

The protein resides in the cytoplasm. It carries out the reaction 3-phosphoshikimate + phosphoenolpyruvate = 5-O-(1-carboxyvinyl)-3-phosphoshikimate + phosphate. It functions in the pathway metabolic intermediate biosynthesis; chorismate biosynthesis; chorismate from D-erythrose 4-phosphate and phosphoenolpyruvate: step 6/7. Its function is as follows. Catalyzes the transfer of the enolpyruvyl moiety of phosphoenolpyruvate (PEP) to the 5-hydroxyl of shikimate-3-phosphate (S3P) to produce enolpyruvyl shikimate-3-phosphate and inorganic phosphate. This is 3-phosphoshikimate 1-carboxyvinyltransferase from Chlamydia caviae (strain ATCC VR-813 / DSM 19441 / 03DC25 / GPIC) (Chlamydophila caviae).